The primary structure comprises 430 residues: C4-dicarboxylate transport protein (430 aa).

Helical transmembrane passes span 9–29 (VLYV…HFYP), 45–65 (LIKM…IAGM), 79–99 (LLYF…ATHL), 149–169 (GEIL…AHLG), 185–205 (VLFG…FGAM), 223–243 (LIGT…GAIA), 308–328 (IYMT…LTWM), and 356–376 (AATL…ILGI).

This sequence belongs to the dicarboxylate/amino acid:cation symporter (DAACS) (TC 2.A.23) family.

The protein resides in the cell inner membrane. In terms of biological role, responsible for the transport of dicarboxylates such as succinate, fumarate, and malate from the periplasm across the membrane. This chain is C4-dicarboxylate transport protein, found in Burkholderia orbicola (strain AU 1054).